A 476-amino-acid polypeptide reads, in one-letter code: 1-aminocyclopropane-1-carboxylate synthase 4 (476 aa).

At Lys-282 the chain carries N6-(pyridoxal phosphate)lysine.

Belongs to the class-I pyridoxal-phosphate-dependent aminotransferase family. Homodimer. Pyridoxal 5'-phosphate serves as cofactor.

It carries out the reaction S-adenosyl-L-methionine = 1-aminocyclopropane-1-carboxylate + S-methyl-5'-thioadenosine + H(+). It participates in alkene biosynthesis; ethylene biosynthesis via S-adenosyl-L-methionine; ethylene from S-adenosyl-L-methionine: step 1/2. Its function is as follows. Catalyzes the formation of 1-aminocyclopropane-1-carboxylate, a direct precursor of ethylene in higher plants. The protein is 1-aminocyclopropane-1-carboxylate synthase 4 (ACS4) of Solanum lycopersicum (Tomato).